Reading from the N-terminus, the 1247-residue chain is Protein jagged-2 (1247 aa).

Positions 1–23 (MRARGWGRLPRRLLLLLVLCVQA) are cleaved as a signal peptide. Over 24-1082 (TRPMGYFELQ…ETVVMGGSST (1059 aa)) the chain is Extracellular. A glycan (N-linked (GlcNAc...) asparagine) is linked at N153. Positions 196–240 (VRCDENYYSATCNKFCRPRNDFFGHYTCDQYGNKACMDGWMGKEC) constitute a DSL domain. 42 disulfide bridges follow: C198/C207, C211/C223, C231/C240, C245/C256, C249/C262, C264/C273, C276/C287, C282/C293, C295/C304, C311/C323, C317/C333, C335/C344, C351/C362, C356/C371, C373/C382, C389/C400, C394/C409, C411/C420, C427/C438, C432/C447, C449/C458, C465/C475, C469/C484, C486/C495, C502/C513, C507/C522, C524/C533, C540/C551, C545/C560, C562/C571, C589/C612, C606/C622, C624/C633, C640/C651, C645/C660, C662/C671, C678/C689, C683/C698, C700/C709, C716/C727, C721/C736, and C738/C747. In terms of domain architecture, EGF-like 1 spans 241–274 (KEAVCKQGCNLLHGGCTVPGECRCSYGWQGKFCD). In terms of domain architecture, EGF-like 2; atypical spans 275–305 (ECVPYPGCVHGSCVEPWHCDCETNWGGLLCD). 2 consecutive EGF-like domains span residues 307–345 (DLNY…KNCE) and 347–383 (AEHA…PTCA). Positions 385-421 (DIDECASNPCAAGGTCVDQVDGFECICPEQWVGATCQ) constitute an EGF-like 5; calcium-binding domain. An EGF-like 6; calcium-binding domain is found at 423–459 (DANECEGKPCLNAFSCKNLIGGYYCDCLPGWKGINCQ). The EGF-like 7; calcium-binding domain occupies 461-496 (NINDCHGQCQHGGTCKDLVNGYQCVCPRGFGGRHCE). EGF-like domains follow at residues 498–534 (EYDK…LHCE) and 536–572 (DMDL…KNCS). A glycan (N-linked (GlcNAc...) asparagine) is linked at N570. The region spanning 574 to 634 (PRDTCPGGAC…DSGFTGTYCH (61 aa)) is the EGF-like 10; atypical domain. N-linked (GlcNAc...) asparagine glycosylation occurs at N619. The EGF-like 11; calcium-binding domain occupies 636–672 (NIDDCMGQPCRNGGTCIDEVDSFRCFCPSGWEGELCD). The EGF-like 12; calcium-binding domain maps to 674–710 (NPNDCLPDPCHSRGRCYDLVNDFYCACDDGWKGKTCH). EGF-like domains follow at residues 712–748 (REFQ…STCT) and 751–787 (KNSS…RTCT). N-linked (GlcNAc...) asparagine glycosylation is present at N752. 9 disulfides stabilise this stretch: C755/C766, C760/C775, C777/C786, C793/C804, C798/C813, C815/C824, C831/C842, C836/C851, and C853/C862. The EGF-like 15; calcium-binding domain maps to 789-825 (NTNDCNPLPCYNGGICVDGVNWFRCECAPGFAGPDCR). In terms of domain architecture, EGF-like 16; calcium-binding spans 827 to 863 (NIDECQSSPCAYGATCVDEINGYRCSCPPGRSGPRCQ). N-linked (GlcNAc...) asparagine glycosylation is present at N1060. A helical membrane pass occupies residues 1083–1103 (GLLVPVLCSVFSVLWLACVVI). The Cytoplasmic segment spans residues 1104–1247 (CVWWTRKRRK…TKDVRRAGRE (144 aa)). Composition is skewed to basic and acidic residues over residues 1115-1125 (RERSRLPRDES), 1192-1212 (LSRG…KFTK), and 1230-1247 (VDNR…AGRE). Disordered regions lie at residues 1115 to 1148 (RERS…GSGL) and 1167 to 1247 (PRRA…AGRE). S1125 carries the phosphoserine modification.

As to expression, found to be highest in fetal thymus, epidermis, foregut dorsal root ganglia and inner ear. In 2-weeK-old mice, abundant in heart, lung, thymus, skeletal muscle, brain and testis. Expression overlaps partially with Notch1 expression.

The protein localises to the membrane. Functionally, putative Notch ligand involved in the mediation of Notch signaling. Plays an essential role during limb, craniofacial and thymic development. May be involved in myogenesis and in the development of peripheral and central nervous systems. This chain is Protein jagged-2 (Jag2), found in Mus musculus (Mouse).